Here is a 241-residue protein sequence, read N- to C-terminus: 4-hydroxy-tetrahydrodipicolinate reductase (241 aa).

NAD(+) contacts are provided by residues 80 to 82 (ATT) and 104 to 107 (SANM). Histidine 136 acts as the Proton donor/acceptor in catalysis. Histidine 137 provides a ligand contact to (S)-2,3,4,5-tetrahydrodipicolinate. Lysine 140 (proton donor) is an active-site residue. Residue 146–147 (GT) participates in (S)-2,3,4,5-tetrahydrodipicolinate binding.

It belongs to the DapB family.

It localises to the cytoplasm. The enzyme catalyses (S)-2,3,4,5-tetrahydrodipicolinate + NAD(+) + H2O = (2S,4S)-4-hydroxy-2,3,4,5-tetrahydrodipicolinate + NADH + H(+). It catalyses the reaction (S)-2,3,4,5-tetrahydrodipicolinate + NADP(+) + H2O = (2S,4S)-4-hydroxy-2,3,4,5-tetrahydrodipicolinate + NADPH + H(+). It participates in amino-acid biosynthesis; L-lysine biosynthesis via DAP pathway; (S)-tetrahydrodipicolinate from L-aspartate: step 4/4. Catalyzes the conversion of 4-hydroxy-tetrahydrodipicolinate (HTPA) to tetrahydrodipicolinate. The protein is 4-hydroxy-tetrahydrodipicolinate reductase of Staphylococcus haemolyticus (strain JCSC1435).